The primary structure comprises 369 residues: CCA-adding enzyme (369 aa).

2 residues coordinate ATP: Gly8 and Arg11. Gly8 and Arg11 together coordinate CTP. The Mg(2+) site is built by Asp21 and Asp23. Arg91, Arg137, and Arg140 together coordinate ATP. CTP is bound by residues Arg91, Arg137, and Arg140.

It belongs to the tRNA nucleotidyltransferase/poly(A) polymerase family. Bacterial CCA-adding enzyme type 2 subfamily. The cofactor is Mg(2+).

It catalyses the reaction a tRNA precursor + 2 CTP + ATP = a tRNA with a 3' CCA end + 3 diphosphate. The enzyme catalyses a tRNA with a 3' CCA end + 2 CTP + ATP = a tRNA with a 3' CCACCA end + 3 diphosphate. Catalyzes the addition and repair of the essential 3'-terminal CCA sequence in tRNAs without using a nucleic acid template. Adds these three nucleotides in the order of C, C, and A to the tRNA nucleotide-73, using CTP and ATP as substrates and producing inorganic pyrophosphate. tRNA 3'-terminal CCA addition is required both for tRNA processing and repair. Also involved in tRNA surveillance by mediating tandem CCA addition to generate a CCACCA at the 3' terminus of unstable tRNAs. While stable tRNAs receive only 3'-terminal CCA, unstable tRNAs are marked with CCACCA and rapidly degraded. The protein is CCA-adding enzyme of Francisella tularensis subsp. novicida (strain U112).